The chain runs to 290 residues: 4-hydroxybenzoate octaprenyltransferase (290 aa).

8 consecutive transmembrane segments (helical) span residues isoleucine 23 to valine 43, leucine 46 to valine 66, leucine 99 to isoleucine 119, leucine 141 to valine 161, glutamate 163 to tyrosine 183, leucine 213 to asparagine 233, glycine 234 to glutamine 254, and alanine 268 to tryptophan 288.

The protein belongs to the UbiA prenyltransferase family. Requires Mg(2+) as cofactor.

Its subcellular location is the cell inner membrane. It carries out the reaction all-trans-octaprenyl diphosphate + 4-hydroxybenzoate = 4-hydroxy-3-(all-trans-octaprenyl)benzoate + diphosphate. It participates in cofactor biosynthesis; ubiquinone biosynthesis. Functionally, catalyzes the prenylation of para-hydroxybenzoate (PHB) with an all-trans polyprenyl group. Mediates the second step in the final reaction sequence of ubiquinone-8 (UQ-8) biosynthesis, which is the condensation of the polyisoprenoid side chain with PHB, generating the first membrane-bound Q intermediate 3-octaprenyl-4-hydroxybenzoate. The protein is 4-hydroxybenzoate octaprenyltransferase of Escherichia coli (strain SE11).